Here is a 710-residue protein sequence, read N- to C-terminus: Polyribonucleotide nucleotidyltransferase (710 aa).

Mg(2+) is bound by residues D486 and D492. One can recognise a KH domain in the interval 553–612 (PRFETIKIHPDKIRDIIGKGGATIRSITEETNSSIDIDDDGTVKVYADDNEALQAALNRI). Residues 622 to 690 (GAIYEGTVVR…QRGRIKLSIK (69 aa)) form the S1 motif domain.

The protein belongs to the polyribonucleotide nucleotidyltransferase family. Component of the RNA degradosome, which is a multiprotein complex involved in RNA processing and mRNA degradation. Mg(2+) serves as cofactor.

The protein localises to the cytoplasm. The enzyme catalyses RNA(n+1) + phosphate = RNA(n) + a ribonucleoside 5'-diphosphate. Involved in mRNA degradation. Catalyzes the phosphorolysis of single-stranded polyribonucleotides processively in the 3'- to 5'-direction. This Cellvibrio japonicus (strain Ueda107) (Pseudomonas fluorescens subsp. cellulosa) protein is Polyribonucleotide nucleotidyltransferase.